Reading from the N-terminus, the 261-residue chain is NAD-capped RNA hydrolase NudC (261 aa).

Position 74 (arginine 74) interacts with substrate. Cysteine 103, cysteine 106, cysteine 121, and cysteine 124 together coordinate Zn(2+). Residue tyrosine 129 participates in substrate binding. One can recognise a Nudix hydrolase domain in the interval 130-253; that stretch reads PRIFPCIIVA…TIARALIEQT (124 aa). The a divalent metal cation site is built by alanine 163, glutamate 179, and glutamate 183. A Nudix box motif is present at residues 164–185; it reads GFVEVGETLEQCVAREVKEETG. 197–204 contacts substrate; sequence QPWAFPSS. Residue glutamate 224 participates in a divalent metal cation binding. Alanine 246 provides a ligand contact to substrate.

This sequence belongs to the Nudix hydrolase family. NudC subfamily. Homodimer. Mg(2+) serves as cofactor. It depends on Mn(2+) as a cofactor. Requires Zn(2+) as cofactor.

It catalyses the reaction a 5'-end NAD(+)-phospho-ribonucleoside in mRNA + H2O = a 5'-end phospho-adenosine-phospho-ribonucleoside in mRNA + beta-nicotinamide D-ribonucleotide + 2 H(+). The catalysed reaction is NAD(+) + H2O = beta-nicotinamide D-ribonucleotide + AMP + 2 H(+). It carries out the reaction NADH + H2O = reduced beta-nicotinamide D-ribonucleotide + AMP + 2 H(+). Its function is as follows. mRNA decapping enzyme that specifically removes the nicotinamide adenine dinucleotide (NAD) cap from a subset of mRNAs by hydrolyzing the diphosphate linkage to produce nicotinamide mononucleotide (NMN) and 5' monophosphate mRNA. The NAD-cap is present at the 5'-end of some mRNAs and stabilizes RNA against 5'-processing. Has preference for mRNAs with a 5'-end purine. Catalyzes the hydrolysis of a broad range of dinucleotide pyrophosphates. This chain is NAD-capped RNA hydrolase NudC, found in Vibrio vulnificus (strain CMCP6).